The chain runs to 1107 residues: Phospholipid-transporting ATPase 2 (1107 aa).

Topologically, residues 1-33 (MKRFVYINDDEASKELCCDNRISNRKYTLWNFL) are cytoplasmic. The helical transmembrane segment at 34–55 (PKNLWEQFSRFMNQYFLLIACL) threads the bilayer. The Extracellular portion of the chain corresponds to 56–60 (QLWSL). The chain crosses the membrane as a helical span at residues 61–83 (ITPVNPASTWGPLIFIFAVSASK). Topologically, residues 84 to 268 (EAWDDYHRYL…TAMDAMIDKL (185 aa)) are cytoplasmic. The helical transmembrane segment at 269–290 (TGAIFVFQIVVVLVLGIAGNVW) threads the bilayer. The Extracellular portion of the chain corresponds to 291 to 315 (KDTEARKQWYVQYPEEAPWYELLVI). Residues 316–333 (PLRFELLCSIMIPISIKV) form a helical membrane-spanning segment. Topologically, residues 334–807 (SLDLVKGLYA…HGRYSYNRTA (474 aa)) are cytoplasmic. The active-site 4-aspartylphosphate intermediate is aspartate 381. Mg(2+) contacts are provided by aspartate 752 and aspartate 756. Residues 808–827 (FLSQYSFYKSLLICFIQIFF) form a helical membrane-spanning segment. At 828–841 (SFISGVSGTSLFNS) the chain is on the extracellular side. The chain crosses the membrane as a helical span at residues 842–860 (VSLMAYNVFYTSVPVLVSV). Over 861 to 890 (IDKDLSEASVMQHPQILFYCQAGRLLNPST) the chain is Cytoplasmic. Residues 891–912 (FAGWFGRSLFHAIIVFVITIHA) form a helical membrane-spanning segment. Topologically, residues 913–919 (YAYEKSE) are extracellular. Residues 920–942 (MEELGMVALSGCIWLQAFVVAQE) form a helical membrane-spanning segment. Topologically, residues 943 to 948 (TNSFTV) are cytoplasmic. A helical membrane pass occupies residues 949–969 (LQHLSIWGNLVGFYAINFLFS). Topologically, residues 970–982 (AIPSSGMYTIMFR) are extracellular. A helical transmembrane segment spans residues 983–1007 (LCSQPSYWITMFLIVGAGMGPIFAL). The Cytoplasmic portion of the chain corresponds to 1008–1107 (KYFRYTYRPS…SGYTRNCKDN (100 aa)). The tract at residues 1048–1075 (DLSPISITQPKNRSPVYEPLLSDSPNAT) is disordered. Phosphoserine is present on serine 1050.

It belongs to the cation transport ATPase (P-type) (TC 3.A.3) family. Type IV subfamily. As to quaternary structure, interacts with ALIS1, ALIS3 and ALIS5 in a heterologous system.

It is found in the endoplasmic reticulum membrane. Its subcellular location is the prevacuolar compartment membrane. It carries out the reaction ATP + H2O + phospholipidSide 1 = ADP + phosphate + phospholipidSide 2.. Involved in transport of phospholipids. Contributes to transmembrane flipping of lipids. Requires an interaction with a protein of the ALIS family for activity. Specific for phosphatidylserine and has no activity with lysolipid, phosphatidylcholine or phosphatidylethanolamine. The protein is Phospholipid-transporting ATPase 2 of Arabidopsis thaliana (Mouse-ear cress).